We begin with the raw amino-acid sequence, 299 residues long: Leucine zipper transcription factor-like protein 1 (299 aa).

Positions 96 to 299 form a coiled coil; it reads LKLQTDISEL…KRLAKYESED (204 aa). The interaction with BSS9 stretch occupies residues 145–299; that stretch reads GTTELLNKEI…KRLAKYESED (155 aa).

The protein belongs to the LZTFL1 family. As to quaternary structure, self-associates. Interacts with BBS9; the interaction mediates the association of LZTL1 with the BBsome complex and regulates BBSome ciliary trafficking. As to expression, highly expressed in testis. Expressed in brain, cerebellum, eye, heart, kidney, liver, lung and trachea. In small intestine, graded expression along the crypt-villus axis with high levels in the villus apex and lower levels in the crypt stem cells (at protein level). Not expressed in skeletal muscle and white adipose tissue.

It localises to the cytoplasm. Its function is as follows. Regulates ciliary localization of the BBSome complex. Together with the BBSome complex, controls SMO ciliary trafficking and contributes to the sonic hedgehog (SHH) pathway regulation. May play a role in neurite outgrowth. May have tumor suppressor function. This is Leucine zipper transcription factor-like protein 1 (Lztfl1) from Mus musculus (Mouse).